Reading from the N-terminus, the 252-residue chain is MDMKGTYLVTVILLVSTLSVGMCSNGWIRAHATYYGVNDSPASLGGACGYDNPYHAGFGAHTAALSGELFRSGESCGGCYQVRCDFPADPKWCLRGAAVTVTATNFCPTNNNNGWCNLPRHHFDMSSPAFFRIARRGNEGIVPVFYRRVGCKRRGGVRFTMRGQGNFNMVMISNVGGGGSVRSVAVRGSKGKTWLQMTRNWGANWQSSGDLRGQRLSFKVTLTDSKTQTFLNVVPSSWWFGQTFSSRGRQFV.

The N-terminal stretch at 1–23 (MDMKGTYLVTVILLVSTLSVGMC) is a signal peptide. Residues 45 to 156 (GGACGYDNPY…RRVGCKRRGG (112 aa)) enclose the Expansin-like EG45 domain. The region spanning 166–246 (NFNMVMISNV…SWWFGQTFSS (81 aa)) is the Expansin-like CBD domain.

The protein belongs to the expansin family. Expansin A subfamily.

Its subcellular location is the secreted. It localises to the cell wall. The protein localises to the membrane. Functionally, causes loosening and extension of plant cell walls by disrupting non-covalent bonding between cellulose microfibrils and matrix glucans. No enzymatic activity has been found. The protein is Expansin-A12 (EXPA12) of Arabidopsis thaliana (Mouse-ear cress).